We begin with the raw amino-acid sequence, 801 residues long: Probable inorganic carbon transporter subunit DabA (801 aa).

Residues Cys-330, Asp-332, His-489, and Cys-504 each coordinate Zn(2+).

Belongs to the inorganic carbon transporter (TC 9.A.2) DabA family. Forms a complex with DabB. Zn(2+) serves as cofactor.

It is found in the cell inner membrane. In terms of biological role, part of an energy-coupled inorganic carbon pump. This Jannaschia sp. (strain CCS1) protein is Probable inorganic carbon transporter subunit DabA.